Here is a 201-residue protein sequence, read N- to C-terminus: Increased recombination centers protein 21 (201 aa).

A Cytochrome b5 heme-binding domain is found at 122–200 (PLRINRKIVK…LQVCFIGVVC (79 aa)). Residues histidine 158 and histidine 182 each coordinate heme.

Belongs to the cytochrome b5 family.

Functionally, involved in resistance to carboplatin and cisplatin. Is probably involved in a pathway contributing to genomic integrity. The sequence is that of Increased recombination centers protein 21 (IRC21) from Saccharomyces cerevisiae (strain ATCC 204508 / S288c) (Baker's yeast).